The sequence spans 145 residues: Large ribosomal subunit protein uL14m (145 aa).

The transit peptide at 1–30 (MAALTGLWGSFAHVSRAFSQRCFSTSGSLS) directs the protein to the mitochondrion.

The protein belongs to the universal ribosomal protein uL14 family. As to quaternary structure, component of the mitochondrial ribosome large subunit (39S) which comprises a 16S rRNA and about 50 distinct proteins. Interacts with MALSU1.

The protein localises to the mitochondrion. May form part of 2 intersubunit bridges in the assembled ribosome. Upon binding to MALSU1, intersubunit bridge formation is blocked, preventing ribosome formation and repressing translation. This chain is Large ribosomal subunit protein uL14m (Mrpl14), found in Mus musculus (Mouse).